The chain runs to 144 residues: 3-hydroxyacyl-[acyl-carrier-protein] dehydratase FabZ (144 aa).

Residue histidine 48 is part of the active site.

Belongs to the thioester dehydratase family. FabZ subfamily.

The protein resides in the cytoplasm. The enzyme catalyses a (3R)-hydroxyacyl-[ACP] = a (2E)-enoyl-[ACP] + H2O. Functionally, involved in unsaturated fatty acids biosynthesis. Catalyzes the dehydration of short chain beta-hydroxyacyl-ACPs and long chain saturated and unsaturated beta-hydroxyacyl-ACPs. This chain is 3-hydroxyacyl-[acyl-carrier-protein] dehydratase FabZ, found in Bacillus cytotoxicus (strain DSM 22905 / CIP 110041 / 391-98 / NVH 391-98).